The following is a 145-amino-acid chain: Anaerobic nitrite reductase NSHB5 (145 aa).

Residues 2 to 142 enclose the Globin domain; that stretch reads GFSETQEELV…LAAAIKEEMK (141 aa). A Homodimerization motif is present at residues 35-39; the sequence is EIAPA. Heme b contacts are provided by serine 45, histidine 59, lysine 61, arginine 84, threonine 88, and histidine 89. The Homodimerization signature appears at 96–108; the sequence is DAHFEVVKTALLD.

The protein belongs to the plant globin family. As to quaternary structure, homodimer. Heme b is required as a cofactor. Expressed in embryonic (embryos, coleoptiles and seminal roots) and vegetative (leaves and roots) organs.

The protein localises to the cytoplasm. It is found in the nucleus. The catalysed reaction is Fe(III)-heme b-[protein] + nitric oxide + H2O = Fe(II)-heme b-[protein] + nitrite + 2 H(+). Its function is as follows. Phytoglobin that reduces nitrite to nitric oxide under anoxic conditions (e.g. during flooding or in waterlogged soil). May not function as an oxygen storage or transport protein. Has an unusually high affinity for O(2) through an hexacoordinate heme iron because of a very low dissociation constant. In Oryza sativa subsp. indica (Rice), this protein is Anaerobic nitrite reductase NSHB5.